Reading from the N-terminus, the 68-residue chain is Protein transport protein Sec61 subunit gamma (68 aa).

Residues 1–32 (MDQVMQFVEPSRQFVKDSIRLVKRCTKPDRKE) lie on the Cytoplasmic side of the membrane. The chain crosses the membrane as a helical span at residues 33–61 (FQKVAMATAIGFAIMGFIGFFVKLIHIPI). Topologically, residues 62–68 (NNIIVGG) are extracellular.

It belongs to the SecE/SEC61-gamma family. As to quaternary structure, the SEC61 channel-forming translocon complex consists of channel-forming core components SEC61A1, SEC61B and SEC61G and different auxiliary components such as SEC62 and SEC63. The SEC61 channel associates with the multi-pass translocon (MPT) complex.

It is found in the endoplasmic reticulum membrane. In terms of biological role, component of SEC61 channel-forming translocon complex that mediates transport of signal peptide-containing precursor polypeptides across the endoplasmic reticulum (ER). Forms a ribosome receptor and a gated pore in the ER membrane, both functions required for cotranslational translocation of nascent polypeptides. The SEC61 channel is also involved in ER membrane insertion of transmembrane proteins: it mediates membrane insertion of the first few transmembrane segments of proteins, while insertion of subsequent transmembrane regions of multi-pass membrane proteins is mediated by the multi-pass translocon (MPT) complex. The sequence is that of Protein transport protein Sec61 subunit gamma (sec61g) from Harpagifer antarcticus (Antarctic spiny plunderfish).